We begin with the raw amino-acid sequence, 76 residues long: Sec-independent protein translocase protein TatA (76 aa).

A helical membrane pass occupies residues 1–21 (MGSFSIWHWLIVLVIVMLVFG). Composition is skewed to basic and acidic residues over residues 41–50 (DGMKDGEDKG) and 57–76 (KELR…SRQQ). The disordered stretch occupies residues 41-76 (DGMKDGEDKGAQPAASKELRDSTTIDVDAKEKSRQQ).

Belongs to the TatA/E family. The Tat system comprises two distinct complexes: a TatABC complex, containing multiple copies of TatA, TatB and TatC subunits, and a separate TatA complex, containing only TatA subunits. Substrates initially bind to the TatABC complex, which probably triggers association of the separate TatA complex to form the active translocon.

It is found in the cell inner membrane. In terms of biological role, part of the twin-arginine translocation (Tat) system that transports large folded proteins containing a characteristic twin-arginine motif in their signal peptide across membranes. TatA could form the protein-conducting channel of the Tat system. The sequence is that of Sec-independent protein translocase protein TatA from Cupriavidus taiwanensis (strain DSM 17343 / BCRC 17206 / CCUG 44338 / CIP 107171 / LMG 19424 / R1) (Ralstonia taiwanensis (strain LMG 19424)).